Consider the following 260-residue polypeptide: D-threitol dehydrogenase (260 aa).

Position 21-50 (21-50) interacts with NAD(+); it reads LVTGAASGIGAAIASAYATKGARIAAVDLN. Tyrosine 166 functions as the Proton acceptor in the catalytic mechanism. Lysine 170 is an NAD(+) binding site.

This sequence belongs to the short-chain dehydrogenases/reductases (SDR) family.

The enzyme catalyses D-threitol + NAD(+) = D-erythrulose + NADH + H(+). Its pathway is carbohydrate metabolism; D-threitol degradation. In terms of biological role, catalyzes the NAD-dependent reversible oxidation of D-threitol. Involved in the degradation pathway of D-threitol, that allows M.smegmatis to grow on this compound as the sole carbon source. Does not catalyze the oxidation of xylitol, L-sorbitol, and L-sorbose. The chain is D-threitol dehydrogenase from Mycolicibacterium smegmatis (strain ATCC 700084 / mc(2)155) (Mycobacterium smegmatis).